The chain runs to 101 residues: Protein SPIRAL1-like 3 (101 aa).

A compositionally biased stretch (gly residues) spans 1 to 22 (MGRGVSSGGGQSSLGYLFGGGE). 2 disordered regions span residues 1-54 (MGRG…GIQS) and 73-101 (TDRP…KDGK).

This sequence belongs to the SPIRAL1 family.

In terms of biological role, acts in maintaining the cortical microtubules organization essential for anisotropic cell growth. The polypeptide is Protein SPIRAL1-like 3 (Oryza sativa subsp. japonica (Rice)).